We begin with the raw amino-acid sequence, 130 residues long: MPIKLKGKIVSGLGVGAKYVQLYRGVFNKYLGIDPYPGTLNIDIGQDFFIYTKKLKAKIIPPPRKGLGCVLAYPGILMGIKIYVIKPCITNHGRNILEIISDKNLRKTLNLKDNDIVEIIIYDEEDYSYI.

12–17 is a binding site for CDP; the sequence is GLGVGA. Mg(2+) contacts are provided by Thr39 and Asn41. Residues Thr90 and Glu98 each contribute to the FMN site. 103–106 lines the CDP pocket; that stretch reads KNLR.

The protein belongs to the archaeal riboflavin kinase family. Mg(2+) serves as cofactor.

The enzyme catalyses riboflavin + CTP = CDP + FMN + H(+). It participates in cofactor biosynthesis; FMN biosynthesis; FMN from riboflavin (CTP route): step 1/1. Catalyzes the CTP-dependent phosphorylation of riboflavin (vitamin B2) to form flavin mononucleotide (FMN). This Staphylothermus marinus (strain ATCC 43588 / DSM 3639 / JCM 9404 / F1) protein is Riboflavin kinase.